A 91-amino-acid polypeptide reads, in one-letter code: UPF0358 protein SSP1677 (91 aa).

The protein belongs to the UPF0358 family.

The chain is UPF0358 protein SSP1677 from Staphylococcus saprophyticus subsp. saprophyticus (strain ATCC 15305 / DSM 20229 / NCIMB 8711 / NCTC 7292 / S-41).